The chain runs to 327 residues: Ketol-acid reductoisomerase (NADP(+)) (327 aa).

The region spanning 2-182 is the KARI N-terminal Rossmann domain; it reads AKIYTDKDAS…GATRAGVIET (181 aa). Residues 25 to 28, Arg-48, Ser-53, and 83 to 86 contribute to the NADP(+) site; these read YGIQ and DMEQ. His-108 is a catalytic residue. Residue Gly-134 participates in NADP(+) binding. A KARI C-terminal knotted domain is found at 183–327; sequence TFAEETETDL…GAEMRKLLFG (145 aa). Residues Asp-191, Glu-195, Glu-227, and Glu-231 each coordinate Mg(2+). Ser-252 lines the substrate pocket.

The protein belongs to the ketol-acid reductoisomerase family. Mg(2+) serves as cofactor.

It carries out the reaction (2R)-2,3-dihydroxy-3-methylbutanoate + NADP(+) = (2S)-2-acetolactate + NADPH + H(+). The enzyme catalyses (2R,3R)-2,3-dihydroxy-3-methylpentanoate + NADP(+) = (S)-2-ethyl-2-hydroxy-3-oxobutanoate + NADPH + H(+). The protein operates within amino-acid biosynthesis; L-isoleucine biosynthesis; L-isoleucine from 2-oxobutanoate: step 2/4. Its pathway is amino-acid biosynthesis; L-valine biosynthesis; L-valine from pyruvate: step 2/4. In terms of biological role, involved in the biosynthesis of branched-chain amino acids (BCAA). Catalyzes an alkyl-migration followed by a ketol-acid reduction of (S)-2-acetolactate (S2AL) to yield (R)-2,3-dihydroxy-isovalerate. In the isomerase reaction, S2AL is rearranged via a Mg-dependent methyl migration to produce 3-hydroxy-3-methyl-2-ketobutyrate (HMKB). In the reductase reaction, this 2-ketoacid undergoes a metal-dependent reduction by NADPH to yield (R)-2,3-dihydroxy-isovalerate. This Pyrobaculum neutrophilum (strain DSM 2338 / JCM 9278 / NBRC 100436 / V24Sta) (Thermoproteus neutrophilus) protein is Ketol-acid reductoisomerase (NADP(+)).